The primary structure comprises 265 residues: Type II pantothenate kinase (265 aa).

6–13 (DAGGTLIK) is an ATP binding site. E70 acts as the Proton acceptor in catalysis. Residues T99, 121–125 (GGMIQ), Y137, and S225 contribute to the ATP site.

Belongs to the type II pantothenate kinase family. In terms of assembly, homodimer.

The protein localises to the cytoplasm. The enzyme catalyses (R)-pantothenate + ATP = (R)-4'-phosphopantothenate + ADP + H(+). It functions in the pathway cofactor biosynthesis; coenzyme A biosynthesis; CoA from (R)-pantothenate: step 1/5. In terms of biological role, catalyzes the phosphorylation of pantothenate (Pan), the first step in CoA biosynthesis. In Staphylococcus saprophyticus subsp. saprophyticus (strain ATCC 15305 / DSM 20229 / NCIMB 8711 / NCTC 7292 / S-41), this protein is Type II pantothenate kinase.